The primary structure comprises 78 residues: RNA-binding protein Hfq (78 aa).

Residues 10–69 enclose the Sm domain; sequence DPFLNTLRKEHVPVSIYLVNGIKLQGQIESFDQYVVLLRNTVTQMVYKHAISTVVPARAV.

Belongs to the Hfq family. Homohexamer.

In terms of biological role, RNA chaperone that binds small regulatory RNA (sRNAs) and mRNAs to facilitate mRNA translational regulation in response to envelope stress, environmental stress and changes in metabolite concentrations. Also binds with high specificity to tRNAs. This is RNA-binding protein Hfq from Bordetella avium (strain 197N).